We begin with the raw amino-acid sequence, 1107 residues long: Dynein axonemal assembly factor 1 homolog (1107 aa).

LRR repeat units lie at residues 34–56 (HLNDILYLNYSGYNAIESLEEYV), 57–78 (GLKCLWLECNAISEIKGLEYQT), 79–100 (ELKCLYLQNNLITKIENLDSCK), 101–122 (QLDTLNLSHNHITRIENCGHDI), 125–146 (VLNTLNLSHNYLKTADNLDHLR), and 150–171 (FVSVLDLSHNRIEDIAIVKILG). One can recognise an LRRCT domain in the interval 184–223 (NPVVNEIPSYRKTLILECKNLTYLDTRPVFDRDRACAEAW). 6 disordered regions span residues 258 to 281 (HRGDGEPELLKTSSDEEDEDKASK), 428 to 487 (NESP…TLNV), 500 to 608 (ESKD…LEKE), 780 to 810 (KEEPKAPETPSIESEEEIPEELEVHSSEHEQ), 834 to 855 (SSEDLKSNFDDSSESSDSAEED), and 1070 to 1107 (AAHAGEVMQDTEDVESKPVEIDGTKEETVDSELADNCD). Over residues 428 to 437 (NESPLTSPSF) the composition is skewed to polar residues. Over residues 446–459 (EEIEPTDVEEEQQI) the composition is skewed to acidic residues. Positions 500–512 (ESKDGELISKVES) are enriched in basic and acidic residues. Residues 531–544 (DNSESEPTDITNED) show a composition bias toward acidic residues. Residues 549 to 560 (SSSVSVTSSTDS) are compositionally biased toward low complexity. The segment covering 581–597 (NYRQDSTTSTDSENEVS) has biased composition (polar residues). Positions 801–810 (LEVHSSEHEQ) are enriched in basic and acidic residues. Over residues 844 to 855 (DSSESSDSAEED) the composition is skewed to acidic residues. The segment covering 1083-1097 (VESKPVEIDGTKEET) has biased composition (basic and acidic residues). A compositionally biased stretch (acidic residues) spans 1098-1107 (VDSELADNCD).

It belongs to the DNAAF1 family.

The protein localises to the cell projection. Its subcellular location is the cilium. Its function is as follows. Cilium-specific protein required for cilia structures. This is Dynein axonemal assembly factor 1 homolog from Aedes aegypti (Yellowfever mosquito).